The following is a 347-amino-acid chain: Phosphate acyltransferase (347 aa).

Belongs to the PlsX family. In terms of assembly, homodimer. Probably interacts with PlsY.

The protein resides in the cytoplasm. It catalyses the reaction a fatty acyl-[ACP] + phosphate = an acyl phosphate + holo-[ACP]. Its pathway is lipid metabolism; phospholipid metabolism. Its function is as follows. Catalyzes the reversible formation of acyl-phosphate (acyl-PO(4)) from acyl-[acyl-carrier-protein] (acyl-ACP). This enzyme utilizes acyl-ACP as fatty acyl donor, but not acyl-CoA. In Sinorhizobium fredii (strain NBRC 101917 / NGR234), this protein is Phosphate acyltransferase.